The primary structure comprises 147 residues: Lysozyme C-3 (147 aa).

The N-terminal stretch at 1 to 18 (MKALVILGLLFLSVAVQG) is a signal peptide. One can recognise a C-type lysozyme domain in the interval 19–147 (KVFERCELAR…VSSYVEGCKL (129 aa)). 4 cysteine pairs are disulfide-bonded: cysteine 24–cysteine 145, cysteine 48–cysteine 133, cysteine 83–cysteine 99, and cysteine 95–cysteine 113. Residues glutamate 53 and aspartate 71 contribute to the active site.

It belongs to the glycosyl hydrolase 22 family. Monomer. In terms of tissue distribution, expressed in stomach.

Its subcellular location is the secreted. The catalysed reaction is Hydrolysis of (1-&gt;4)-beta-linkages between N-acetylmuramic acid and N-acetyl-D-glucosamine residues in a peptidoglycan and between N-acetyl-D-glucosamine residues in chitodextrins.. Lysozymes have primarily a bacteriolytic function; those in tissues and body fluids are associated with the monocyte-macrophage system and enhance the activity of immunoagents. This Ovis aries (Sheep) protein is Lysozyme C-3.